The sequence spans 165 residues: Calcium-binding protein H (165 aa).

EF-hand domains follow at residues Gln-7 to Lys-42, Tyr-43 to Asp-78, Tyr-88 to Asp-123, and His-124 to Ser-159. The Ca(2+) site is built by Asp-20, Asp-22, Asn-24, Glu-26, Glu-31, Asp-56, Asp-58, Glu-60, Lys-62, Glu-67, Asp-101, Asn-103, Asp-105, Arg-107, Glu-112, Asp-137, Asn-139, Asp-141, Tyr-143, and Glu-148.

This chain is Calcium-binding protein H (cbpH), found in Dictyostelium discoideum (Social amoeba).